The chain runs to 467 residues: Cysteine--tRNA ligase (467 aa).

Cysteine 29 is a Zn(2+) binding site. The 'HIGH' region signature appears at 31–41 (PTVYNYVHIGN). Zn(2+)-binding residues include cysteine 209, histidine 234, and glutamate 238. Residues 267–271 (KMSKS) carry the 'KMSKS' region motif. Residue lysine 270 coordinates ATP.

The protein belongs to the class-I aminoacyl-tRNA synthetase family. As to quaternary structure, monomer. Zn(2+) serves as cofactor.

It is found in the cytoplasm. The enzyme catalyses tRNA(Cys) + L-cysteine + ATP = L-cysteinyl-tRNA(Cys) + AMP + diphosphate. This Xylella fastidiosa (strain 9a5c) protein is Cysteine--tRNA ligase.